The primary structure comprises 1205 residues: Nitric oxide synthase 3 (1205 aa).

The disordered stretch occupies residues 1–73 (MGNLKSVGQE…PPDGPKFPRV (73 aa)). Glycine 2 carries the N-myristoyl glycine lipid modification. S-palmitoyl cysteine attachment occurs at residues cysteine 15 and cysteine 26. Residues 15-27 (CGLGLGLGLGLCG) show a composition bias toward gly residues. A compositionally biased stretch (pro residues) spans 44-54 (LAPPPSPPPAP). Residues cysteine 96 and cysteine 101 each contribute to the Zn(2+) site. The interval 100–488 (RCLGSLVFPR…TDPWKGSASK (389 aa)) is interaction with NOSIP. Serine 104 is a binding site for (6R)-L-erythro-5,6,7,8-tetrahydrobiopterin. A Phosphoserine; by CDK5 modification is found at serine 116. Cysteine 186 contributes to the heme b binding site. Positions 249, 358, 359, 363, and 368 each coordinate L-arginine. (6R)-L-erythro-5,6,7,8-tetrahydrobiopterin is bound by residues alanine 448, tryptophan 449, and phenylalanine 462. Tyrosine 477 provides a ligand contact to heme b. The interval 492-512 (VTRKKTFKEVANAVKISASLM) is calmodulin-binding. A Phosphothreonine; by AMPK modification is found at threonine 497. Residues 522-705 (ATILYGSETG…AFGGWAQAAF (184 aa)) enclose the Flavodoxin-like domain. FMN-binding residues include serine 528, glutamate 529, threonine 530, arginine 532, serine 574, and threonine 575. A phosphoserine mark is found at serine 617, serine 635, and serine 640. FMN-binding residues include serine 656, cysteine 663, glutamate 689, and glutamine 693. Positions 758-1004 (RKMVQATVLA…IRGAPSFRLP (247 aa)) constitute an FAD-binding FR-type domain. Arginine 778 is a binding site for NADP(+). FAD is bound at residue histidine 800. Positions 819–850 (VEDPPPPGEPVAVEQLEKGSPGGPPPSWVRDP) are disordered. A Phosphoserine modification is found at serine 838. Residues arginine 940, tyrosine 942, serine 943, threonine 958, alanine 960, tyrosine 964, valine 977, cysteine 978, and serine 979 each coordinate FAD. NADP(+) is bound by residues threonine 1018, arginine 1051, serine 1080, arginine 1081, lysine 1087, tyrosine 1089, and glutamine 1091. Threonine 1177 carries the phosphothreonine modification. Serine 1179 carries the post-translational modification Phosphoserine; by AMPK. Serine 1181 carries the post-translational modification Phosphoserine.

The protein belongs to the NOS family. Homodimer. Interacts with NOSIP and NOSTRIN. Interacts with HSP90AB1. Forms a complex with ASL, ASS1 and SLC7A1; the complex regulates cell-autonomous L-arginine synthesis and citrulline recycling while channeling extracellular L-arginine to nitric oxide synthesis pathway. Heme b serves as cofactor. It depends on FAD as a cofactor. FMN is required as a cofactor. The cofactor is (6R)-L-erythro-5,6,7,8-tetrahydrobiopterin. Phosphorylation by AMPK at Ser-1179 in the presence of Ca(2+)-calmodulin (CaM) activates activity. In absence of Ca(2+)-calmodulin, AMPK also phosphorylates Thr-497, resulting in inhibition of activity. Phosphorylation of Ser-116 by CDK5 reduces activity.

It is found in the membrane. Its subcellular location is the caveola. The protein resides in the cytoplasm. The protein localises to the cytoskeleton. It localises to the golgi apparatus. It is found in the cell membrane. It carries out the reaction 2 L-arginine + 3 NADPH + 4 O2 + H(+) = 2 L-citrulline + 2 nitric oxide + 3 NADP(+) + 4 H2O. With respect to regulation, stimulated by calcium/calmodulin. Inhibited by NOSIP and NOSTRIN. Produces nitric oxide (NO) which is implicated in vascular smooth muscle relaxation through a cGMP-mediated signal transduction pathway. NO mediates vascular endothelial growth factor (VEGF)-induced angiogenesis in coronary vessels and promotes blood clotting through the activation of platelets. This chain is Nitric oxide synthase 3 (NOS3), found in Canis lupus familiaris (Dog).